The primary structure comprises 291 residues: Phosphoribosylaminoimidazole-succinocarboxamide synthase (291 aa).

The protein belongs to the SAICAR synthetase family.

The enzyme catalyses 5-amino-1-(5-phospho-D-ribosyl)imidazole-4-carboxylate + L-aspartate + ATP = (2S)-2-[5-amino-1-(5-phospho-beta-D-ribosyl)imidazole-4-carboxamido]succinate + ADP + phosphate + 2 H(+). It participates in purine metabolism; IMP biosynthesis via de novo pathway; 5-amino-1-(5-phospho-D-ribosyl)imidazole-4-carboxamide from 5-amino-1-(5-phospho-D-ribosyl)imidazole-4-carboxylate: step 1/2. This is Phosphoribosylaminoimidazole-succinocarboxamide synthase (ADE1) from Candida albicans (Yeast).